We begin with the raw amino-acid sequence, 785 residues long: Neutral ceramidase (785 aa).

The signal sequence occupies residues 1 to 35 (MEASSWLCYQARGFGSSRVWLWLLLALVLLNCSLV). N-linked (GlcNAc...) asparagine glycosylation occurs at N31. Catalysis depends on S359, which acts as the Nucleophile. N377, N675, and N685 each carry an N-linked (GlcNAc...) asparagine glycan.

The protein belongs to the neutral ceramidase family. In terms of tissue distribution, expressed in seedlings, with higher levels in roots than in shoots.

Its subcellular location is the secreted. The protein resides in the endoplasmic reticulum. It localises to the golgi apparatus. It catalyses the reaction an N-acylsphing-4-enine + H2O = sphing-4-enine + a fatty acid. Enhanced activity in the presence of calcium, magnesium, manganese and zinc ions, but inhibited activity in the presence of iron ion. Its function is as follows. Hydrolyzes the sphingolipid ceramide into sphingosine and free fatty acid. Uses ceramide instead of phytoceramide as substrate. In Oryza sativa subsp. japonica (Rice), this protein is Neutral ceramidase.